We begin with the raw amino-acid sequence, 508 residues long: GMP synthase [glutamine-hydrolyzing] (508 aa).

The 189-residue stretch at 1–189 folds into the Glutamine amidotransferase type-1 domain; that stretch reads MILVLDFGSQ…ALLVCGCEKT (189 aa). The active-site Nucleophile is C78. Catalysis depends on residues H163 and E165. One can recognise a GMPS ATP-PPase domain in the interval 190–383; the sequence is WGMQHFAQRE…LGVSQDFLMR (194 aa). 217–223 contributes to the ATP binding site; that stretch reads SGGVDST.

Homodimer.

It catalyses the reaction XMP + L-glutamine + ATP + H2O = GMP + L-glutamate + AMP + diphosphate + 2 H(+). It participates in purine metabolism; GMP biosynthesis; GMP from XMP (L-Gln route): step 1/1. Its function is as follows. Catalyzes the synthesis of GMP from XMP. In Helicobacter pylori (strain J99 / ATCC 700824) (Campylobacter pylori J99), this protein is GMP synthase [glutamine-hydrolyzing] (guaA).